A 435-amino-acid polypeptide reads, in one-letter code: MRVLILGSGVIGTTSAWYLSKAGCEVVVVDRQSGAGLETSYANGGQLSFGYTSPWAAPGVPLKAVRWLFERHAPLSIRPTTDWNQYVWLARMLRHCSAERYAVNKSRMLRLSEYSREALEALSAETGITFEGRRLGTIQLFRTQQQLDAAVRDIELLTQYGIPYEVLSPHQLAKFEPGLVDGSVRFAGALRLPHDQTGDCYLFTQRLAALAAKRGVEFRYGCKVQRLEVDGPRVTGAWINGALERADCCVVALGSYSPLLLAPLGLRLPVYPLKGFSLTLPMIDASRAPVSTVLDESYKVAVTRFDERIRVAGMAEVSGYDVSLNPRRRATLEMVVQDVYPGCGDLGRGEFWTGLRPATPDGTPVIGATPYQGLFLNTGHGTLGWTMSSGSGRYLADLICCRPCEISSEGLDMFRYLVSTIPCPQECAPCVPPTP.

Residue 3–17 (VLILGSGVIGTTSAW) coordinates FAD.

The protein belongs to the DadA oxidoreductase family. Requires FAD as cofactor.

It catalyses the reaction a D-alpha-amino acid + A + H2O = a 2-oxocarboxylate + AH2 + NH4(+). The protein operates within amino-acid degradation; D-alanine degradation; NH(3) and pyruvate from D-alanine: step 1/1. In terms of biological role, oxidative deamination of D-amino acids. This chain is D-amino acid dehydrogenase, found in Xylella fastidiosa (strain M12).